Consider the following 299-residue polypeptide: Regucalcin (299 aa).

E18 is an a divalent metal cation binding site. Residues R101, N103, and E121 each coordinate substrate. A divalent metal cation contacts are provided by N154 and D204. D204 (proton donor/acceptor) is an active-site residue.

It belongs to the SMP-30/CGR1 family. Zn(2+) is required as a cofactor. It depends on Mn(2+) as a cofactor. Requires Ca(2+) as cofactor. Mg(2+) serves as cofactor.

It localises to the cytoplasm. The enzyme catalyses D-glucono-1,5-lactone + H2O = D-gluconate + H(+). Its pathway is cofactor biosynthesis; L-ascorbate biosynthesis via UDP-alpha-D-glucuronate pathway; L-ascorbate from UDP-alpha-D-glucuronate: step 3/4. Functionally, gluconolactonase with low activity towards other sugar lactones, including gulonolactone and galactonolactone. Catalyzes a key step in ascorbic acid (vitamin C) biosynthesis. Can also hydrolyze diisopropyl phosphorofluoridate and phenylacetate (in vitro). Calcium-binding protein. Modulates Ca(2+) signaling, and Ca(2+)-dependent cellular processes and enzyme activities. The sequence is that of Regucalcin from Gallus gallus (Chicken).